Consider the following 196-residue polypeptide: Rac-like GTP-binding protein RAC9 (196 aa).

Position 13–20 (Gly-13–Thr-20) interacts with GTP. The Effector region motif lies at Tyr-35 to Phe-43. Residues Asp-60–Gln-64 and Thr-118–Asp-121 contribute to the GTP site. Cysteine methyl ester is present on Cys-193. A lipid anchor (S-geranylgeranyl cysteine) is attached at Cys-193. Positions Ala-194–Leu-196 are cleaved as a propeptide — removed in mature form.

Belongs to the small GTPase superfamily. Rho family.

It is found in the cytoplasm. Its subcellular location is the membrane. In terms of biological role, inactive GDP-bound Rho GTPases reside in the cytosol, are found in a complex with Rho GDP-dissociation inhibitors (Rho GDIs), and are released from the GDI protein in order to translocate to membranes upon activation. This chain is Rac-like GTP-binding protein RAC9 (RAC9), found in Gossypium hirsutum (Upland cotton).